The sequence spans 287 residues: MPELPEVETVRRGLEPVLSGARLARVRANRPDLRFPLPDGFVQRLTGAKILRLDRRAKYLLVPLDRGDTLVMHLGMTGRFEIAAPSGTIRPGDFAREVTPDDKHAHVVFETEDGAVVTYYDPRRFGFMDLIATDKVDRHPWFAAMGPEPLGEGFDAKTLVAAFNGRKQGPKTLLLDQKTVAGLGNIYVCEALHRAHISPFKPAGMIAGKRLGPLTTAIKDVLAEAVEVGGSSLKDFAATDGALGYFQHRFRVYDREGQPCPTPGCKGMIGREVQAGRSTFFCPVCQV.

Pro-2 functions as the Schiff-base intermediate with DNA in the catalytic mechanism. Glu-3 acts as the Proton donor in catalysis. Lys-58 acts as the Proton donor; for beta-elimination activity in catalysis. DNA-binding residues include His-104, Arg-123, and Arg-166. An FPG-type zinc finger spans residues 251–287 (RVYDREGQPCPTPGCKGMIGREVQAGRSTFFCPVCQV). Residue Arg-277 is the Proton donor; for delta-elimination activity of the active site.

The protein belongs to the FPG family. Monomer. The cofactor is Zn(2+).

The enzyme catalyses Hydrolysis of DNA containing ring-opened 7-methylguanine residues, releasing 2,6-diamino-4-hydroxy-5-(N-methyl)formamidopyrimidine.. It carries out the reaction 2'-deoxyribonucleotide-(2'-deoxyribose 5'-phosphate)-2'-deoxyribonucleotide-DNA = a 3'-end 2'-deoxyribonucleotide-(2,3-dehydro-2,3-deoxyribose 5'-phosphate)-DNA + a 5'-end 5'-phospho-2'-deoxyribonucleoside-DNA + H(+). Functionally, involved in base excision repair of DNA damaged by oxidation or by mutagenic agents. Acts as a DNA glycosylase that recognizes and removes damaged bases. Has a preference for oxidized purines, such as 7,8-dihydro-8-oxoguanine (8-oxoG). Has AP (apurinic/apyrimidinic) lyase activity and introduces nicks in the DNA strand. Cleaves the DNA backbone by beta-delta elimination to generate a single-strand break at the site of the removed base with both 3'- and 5'-phosphates. The sequence is that of Formamidopyrimidine-DNA glycosylase from Caulobacter sp. (strain K31).